Consider the following 89-residue polypeptide: Cell division topological specificity factor (89 aa).

Belongs to the MinE family.

In terms of biological role, prevents the cell division inhibition by proteins MinC and MinD at internal division sites while permitting inhibition at polar sites. This ensures cell division at the proper site by restricting the formation of a division septum at the midpoint of the long axis of the cell. In Pectobacterium atrosepticum (strain SCRI 1043 / ATCC BAA-672) (Erwinia carotovora subsp. atroseptica), this protein is Cell division topological specificity factor.